Consider the following 362-residue polypeptide: Protein-glutamate methylesterase/protein-glutamine glutaminase (362 aa).

The 118-residue stretch at 10–127 folds into the Response regulatory domain; sequence RVLVVDDSAF…SLNMHVARDE (118 aa). D61 carries the 4-aspartylphosphate modification. Residues 173–362 enclose the CheB-type methylesterase domain; it reads RLPRRLVLIG…DAITRAVGEG (190 aa). Catalysis depends on residues S184, H211, and D304.

This sequence belongs to the CheB family. In terms of processing, phosphorylated by CheA. Phosphorylation of the N-terminal regulatory domain activates the methylesterase activity.

The protein resides in the cytoplasm. It carries out the reaction [protein]-L-glutamate 5-O-methyl ester + H2O = L-glutamyl-[protein] + methanol + H(+). The catalysed reaction is L-glutaminyl-[protein] + H2O = L-glutamyl-[protein] + NH4(+). Involved in chemotaxis. Part of a chemotaxis signal transduction system that modulates chemotaxis in response to various stimuli. Catalyzes the demethylation of specific methylglutamate residues introduced into the chemoreceptors (methyl-accepting chemotaxis proteins or MCP) by CheR. Also mediates the irreversible deamidation of specific glutamine residues to glutamic acid. The polypeptide is Protein-glutamate methylesterase/protein-glutamine glutaminase (Symbiobacterium thermophilum (strain DSM 24528 / JCM 14929 / IAM 14863 / T)).